Consider the following 183-residue polypeptide: Fetal and adult testis-expressed transcript protein (183 aa).

Positions 42-66 (SRSRGASQKKQKLEQKAAGSASAKR) are disordered. Residues 163 to 181 (TLIIAVLVSASIANLWLWM) form a helical membrane-spanning segment.

Interacts with BIK and RNF183. Interacts with IMMT/MIC60and EMD. Testis-specific in fetus (aged from 6 to 11 weeks). In adult, expressed predominantly in testis, with some expression in lung, heart, kidney, adrenal gland and whole brain. Highly expressed in certain types of cancer tissues such as hepatocellular carcinoma, colon and gastric cancer. Weakly expressed in normal pancreas.

Its subcellular location is the mitochondrion. The protein resides in the mitochondrion outer membrane. It localises to the endoplasmic reticulum membrane. Functionally, involved in the regulation of endoplasmic reticulum (ER)-mitochondria coupling. Negatively regulates the ER-mitochondria distance and Ca(2+) transfer from ER to mitochondria possibly implicating it in the regulation of apoptosis. May collaborate with RNF183 to restrain BIK protein levels thus regulating apoptotic signaling. The polypeptide is Fetal and adult testis-expressed transcript protein (FATE1) (Homo sapiens (Human)).